We begin with the raw amino-acid sequence, 156 residues long: Protein CURVATURE THYLAKOID 1C, chloroplastic (156 aa).

The N-terminal 55 residues, 1 to 55 (MASISATLPSPLLLTQRKSNLTSIQKLPFSLTRGTNDLSPLSLTRNPSSISLMVK), are a transit peptide targeting the chloroplast. Residues 56–83 (ASGESSDSSTDLDVVSTIQNVWDKSEDR) lie on the Stromal side of the membrane. A helical membrane pass occupies residues 84 to 104 (LGLIGLGFAGIVALWASLNLI). Topologically, residues 105–109 (TAIDK) are lumenal. A helical transmembrane segment spans residues 110–130 (LPVISSGFELVGILFSTWFTY). At 131 to 156 (RYLLFKPDRQELSKIVKKSVADILGQ) the chain is on the stromal side.

The protein belongs to the CURT family. As to quaternary structure, homo- and heterodimers and trimers. Interacts with PSAD2.

The protein localises to the plastid. It localises to the chloroplast thylakoid membrane. In terms of biological role, determines thylakoid architecture by inducing membrane curvature. The polypeptide is Protein CURVATURE THYLAKOID 1C, chloroplastic (CURT1C) (Arabidopsis thaliana (Mouse-ear cress)).